The following is a 365-amino-acid chain: uncharacterized protein (365 aa).

The next 3 membrane-spanning stretches (helical) occupy residues 105–125 (TGNW…QCWL), 151–171 (ILTT…SLTI), and 187–207 (IFLI…SLIF).

The protein localises to the cell membrane. This is an uncharacterized protein from Mycoplasma genitalium (strain ATCC 33530 / DSM 19775 / NCTC 10195 / G37) (Mycoplasmoides genitalium).